The following is a 1341-amino-acid chain: Aldehyde oxidase 4 (1341 aa).

The 88-residue stretch at 8–95 (DELIFFVNGK…GAAVTTVEGV (88 aa)) folds into the 2Fe-2S ferredoxin-type domain. The [2Fe-2S] cluster site is built by C47, C52, C55, and C77. Residue Q116 coordinates Mo-molybdopterin. [2Fe-2S] cluster is bound by residues C117, C120, C152, and C154. Position 154 (C154) interacts with Mo-molybdopterin. One can recognise an FAD-binding PCMH-type domain in the interval 239 to 424 (FQGERTTWLA…LSVFIPYSSQ (186 aa)). Residues 267-274 (LIMGNTTV), A348, T357, H361, D370, and V414 contribute to the FAD site. Residues A805, 805-806 (AF), L1046, 1087-1090 (GSMG), Q1202, and L1266 each bind Mo-molybdopterin. Residue E1268 is the Proton acceptor; for azaheterocycle hydroxylase activity of the active site.

It belongs to the xanthine dehydrogenase family. In terms of assembly, homodimer. It depends on [2Fe-2S] cluster as a cofactor. The cofactor is FAD. Mo-molybdopterin is required as a cofactor. In terms of tissue distribution, detected in liver, testis, kidney, brain, Harderian gland and olfactory mucosa.

Its subcellular location is the cytoplasm. The enzyme catalyses an aldehyde + O2 + H2O = a carboxylate + H2O2 + H(+). It catalyses the reaction retinal + O2 + H2O = retinoate + H2O2 + H(+). Functionally, aldehyde oxidase able to catalyze the oxidation of retinaldehyde into retinoate. Acts as a negative modulator of the epidermal trophism. May be able to oxidize a wide variety of aldehydes into their corresponding carboxylates and to hydroxylate azaheterocycles. The sequence is that of Aldehyde oxidase 4 (AOX4) from Cavia porcellus (Guinea pig).